The chain runs to 432 residues: Adenylosuccinate synthetase (432 aa).

GTP contacts are provided by residues 13–19 (GDEGKGK) and 41–43 (GHT). The Proton acceptor role is filled by Asp-14. 2 residues coordinate Mg(2+): Asp-14 and Gly-41. Residues 14–17 (DEGK), 39–42 (NAGH), Thr-130, Arg-144, Gln-225, Thr-240, and Arg-304 each bind IMP. His-42 functions as the Proton donor in the catalytic mechanism. 300–306 (AVTGRPR) is a binding site for substrate. GTP is bound by residues Arg-306, 332–334 (KLD), and 415–417 (STG).

This sequence belongs to the adenylosuccinate synthetase family. As to quaternary structure, homodimer. Requires Mg(2+) as cofactor.

Its subcellular location is the cytoplasm. The enzyme catalyses IMP + L-aspartate + GTP = N(6)-(1,2-dicarboxyethyl)-AMP + GDP + phosphate + 2 H(+). Its pathway is purine metabolism; AMP biosynthesis via de novo pathway; AMP from IMP: step 1/2. Its function is as follows. Plays an important role in the de novo pathway of purine nucleotide biosynthesis. Catalyzes the first committed step in the biosynthesis of AMP from IMP. The chain is Adenylosuccinate synthetase from Actinobacillus pleuropneumoniae serotype 5b (strain L20).